The chain runs to 171 residues: Sec-independent protein translocase protein TatB (171 aa).

The helical transmembrane segment at 2–22 threads the bilayer; that stretch reads FDGIGFMELLLIGVLGLVVLG. Positions 69-171 are disordered; it reads SKGLSNLSPE…DTRSNPKANG (103 aa). The span at 88–97 shows a compositional bias: polar residues; sequence QAAQSVNRPY. Low complexity-rich tracts occupy residues 114 to 130 and 138 to 158; these read HSPV…HTSP and PTAT…SEPS. Polar residues predominate over residues 160-171; the sequence is GADTRSNPKANG.

This sequence belongs to the TatB family. In terms of assembly, the Tat system comprises two distinct complexes: a TatABC complex, containing multiple copies of TatA, TatB and TatC subunits, and a separate TatA complex, containing only TatA subunits. Substrates initially bind to the TatABC complex, which probably triggers association of the separate TatA complex to form the active translocon.

It is found in the cell inner membrane. Part of the twin-arginine translocation (Tat) system that transports large folded proteins containing a characteristic twin-arginine motif in their signal peptide across membranes. Together with TatC, TatB is part of a receptor directly interacting with Tat signal peptides. TatB may form an oligomeric binding site that transiently accommodates folded Tat precursor proteins before their translocation. In Shewanella baltica (strain OS185), this protein is Sec-independent protein translocase protein TatB.